A 219-amino-acid chain; its full sequence is UPF0319 protein MS0844 (219 aa).

The N-terminal stretch at 1–21 is a signal peptide; sequence MKFRLTALAVAALLTSTASFA.

It belongs to the UPF0319 family.

The sequence is that of UPF0319 protein MS0844 from Mannheimia succiniciproducens (strain KCTC 0769BP / MBEL55E).